A 312-amino-acid chain; its full sequence is DNA-directed RNA polymerase subunit alpha (312 aa).

The alpha N-terminal domain (alpha-NTD) stretch occupies residues 1 to 229 (MLQYQIDRID…ELFQPLATVT (229 aa)). Positions 241–312 (SPEAQIPLEE…ISIPQSRTSV (72 aa)) are alpha C-terminal domain (alpha-CTD).

It belongs to the RNA polymerase alpha chain family. As to quaternary structure, in cyanobacteria the RNAP catalytic core is composed of 2 alpha, 1 beta, 1 beta', 1 gamma and 1 omega subunit. When a sigma factor is associated with the core the holoenzyme is formed, which can initiate transcription.

It catalyses the reaction RNA(n) + a ribonucleoside 5'-triphosphate = RNA(n+1) + diphosphate. In terms of biological role, DNA-dependent RNA polymerase catalyzes the transcription of DNA into RNA using the four ribonucleoside triphosphates as substrates. In Prochlorococcus marinus (strain MIT 9215), this protein is DNA-directed RNA polymerase subunit alpha.